A 323-amino-acid chain; its full sequence is MIRRITERASGFAKNIPILKSSRFHGESLDSSVSPVLIPGVHVFHCQDAVGIVAKLSDCIAAKGGNILGYDVFVPENNNVFYSRSEFIFDPVKWPRSQVDEDFQTIAQRYGALNSVVRVPSIDPKYKIALLLSKQDHCLVEMLHKWQDGKLPVDITCVISNHERASNTHVMRFLERHGIPYHYVSTTKENKREDDILELVKDTDFLVLARYMQILSGNFLKGYGKDVINIHHGLLPSFKGGYPAKQAFDAGVKLIGATSHFVTEELDSGPIIEQMVESVSHRDNLRSFVQKSEDLEKKCLTRAIKSYCELRVLPYGTNKTVVF.

The transit peptide at 1–25 (MIRRITERASGFAKNIPILKSSRFH) directs the protein to the mitochondrion. The 84-residue stretch at 41-124 (VHVFHCQDAV…SVVRVPSIDP (84 aa)) folds into the ACT domain. Residue Asp267 is part of the active site.

Belongs to the PurU family. Expressed in leaves, cotyledons, roots, seeds and flowers.

It is found in the mitochondrion. The enzyme catalyses (6R)-10-formyltetrahydrofolate + H2O = (6S)-5,6,7,8-tetrahydrofolate + formate + H(+). In terms of biological role, deformylase involved in photorespiration. Prevents excessive accumulation of 5-formyl tetrahydrofolate (THF), a potent inhibitor of the Gly decarboxylase/Ser hydroxymethyltransferase complex. This Arabidopsis thaliana (Mouse-ear cress) protein is Formyltetrahydrofolate deformylase 1, mitochondrial (PURU1).